Here is a 309-residue protein sequence, read N- to C-terminus: Uracil phosphoribosyltransferase homolog (309 aa).

Residues 1-38 (MATELQCPDSMPCHNQQVNSASTPSPEQLRPGDLILDH) are disordered. The segment covering 13 to 26 (CHNQQVNSASTPSP) has biased composition (polar residues). Ser-25 carries the post-translational modification Phosphoserine. GTP contacts are provided by residues Arg-133, Arg-142, and 176 to 179 (EKGN). Arg-186 contacts 5-phospho-alpha-D-ribose 1-diphosphate. Residues Arg-203 and Arg-232 each contribute to the GTP site. 238–246 (YPILSTGNT) serves as a coordination point for 5-phospho-alpha-D-ribose 1-diphosphate. 299–301 (THF) is a binding site for uracil.

This sequence belongs to the UPRTase family. In terms of tissue distribution, highly expressed in leukocytes, liver, spleen and thymus, with lower expression in brain, lung and skeletal muscle.

Its subcellular location is the cytoplasm. The protein localises to the nucleus. The sequence is that of Uracil phosphoribosyltransferase homolog (UPRT) from Homo sapiens (Human).